The following is a 387-amino-acid chain: Cysteine desulfurase IscS (387 aa).

Residues 73–74 (AT), N155, Q183, and 203–205 (SAH) each bind pyridoxal 5'-phosphate. N6-(pyridoxal phosphate)lysine is present on K206. T241 contacts pyridoxal 5'-phosphate. Residue C328 is the Cysteine persulfide intermediate of the active site. C328 contacts [2Fe-2S] cluster.

It belongs to the class-V pyridoxal-phosphate-dependent aminotransferase family. NifS/IscS subfamily. In terms of assembly, homodimer. Forms a heterotetramer with IscU, interacts with other sulfur acceptors. It depends on pyridoxal 5'-phosphate as a cofactor.

It localises to the cytoplasm. The enzyme catalyses (sulfur carrier)-H + L-cysteine = (sulfur carrier)-SH + L-alanine. It functions in the pathway cofactor biosynthesis; iron-sulfur cluster biosynthesis. Its function is as follows. Master enzyme that delivers sulfur to a number of partners involved in Fe-S cluster assembly, tRNA modification or cofactor biosynthesis. Catalyzes the removal of elemental sulfur atoms from cysteine to produce alanine. Functions as a sulfur delivery protein for Fe-S cluster synthesis onto IscU, an Fe-S scaffold assembly protein, as well as other S acceptor proteins. The chain is Cysteine desulfurase IscS from Helicobacter pylori (strain Shi470).